The primary structure comprises 732 residues: 1,4-alpha-glucan branching enzyme GlgB 2 (732 aa).

Residue Asp-413 is the Nucleophile of the active site. The Proton donor role is filled by Glu-466.

Belongs to the glycosyl hydrolase 13 family. GlgB subfamily. Monomer.

The catalysed reaction is Transfers a segment of a (1-&gt;4)-alpha-D-glucan chain to a primary hydroxy group in a similar glucan chain.. It functions in the pathway glycan biosynthesis; glycogen biosynthesis. In terms of biological role, catalyzes the formation of the alpha-1,6-glucosidic linkages in glycogen by scission of a 1,4-alpha-linked oligosaccharide from growing alpha-1,4-glucan chains and the subsequent attachment of the oligosaccharide to the alpha-1,6 position. In Rhizobium etli (strain ATCC 51251 / DSM 11541 / JCM 21823 / NBRC 15573 / CFN 42), this protein is 1,4-alpha-glucan branching enzyme GlgB 2.